Here is a 686-residue protein sequence, read N- to C-terminus: Probable metal-nicotianamine transporter YSL4 (686 aa).

The next 14 membrane-spanning stretches (helical) occupy residues W27 to V47, M53 to L73, M96 to T116, F151 to I171, V203 to Y223, I264 to L284, V308 to T328, I373 to M393, V405 to L425, I441 to I461, A488 to F508, C554 to V574, F596 to W616, and A629 to L649.

Belongs to the YSL (TC 2.A.67.2) family.

The protein resides in the membrane. May be involved in the transport of nicotianamine-chelated metals. This Oryza sativa subsp. japonica (Rice) protein is Probable metal-nicotianamine transporter YSL4 (YSL4).